Here is a 60-residue protein sequence, read N- to C-terminus: Large ribosomal subunit protein bL32 (60 aa).

It belongs to the bacterial ribosomal protein bL32 family.

This chain is Large ribosomal subunit protein bL32, found in Streptococcus sanguinis (strain SK36).